We begin with the raw amino-acid sequence, 544 residues long: Tyrosine-protein kinase fynb (544 aa).

Residue glycine 2 is the site of N-myristoyl glycine attachment. Residues cysteine 3 and cysteine 6 are each lipidated (S-palmitoyl cysteine). Residues 89 to 150 enclose the SH3 domain; that stretch reads TGVTLFVALY…PSNYVAPVDS (62 aa). The region spanning 156-253 is the SH2 domain; sequence WYFGKLGRKD…GLCCRLVVPC (98 aa). A Protein kinase domain is found at 278-531; sequence LQLIKRLGNG…YLQAFLEDYF (254 aa). Residues 284–292 and lysine 306 each bind ATP; that span reads LGNGQFGEV. Aspartate 397 (proton acceptor) is an active-site residue. Phosphotyrosine; by autocatalysis is present on tyrosine 427. Position 538 is a phosphotyrosine (tyrosine 538).

Belongs to the protein kinase superfamily. Tyr protein kinase family. SRC subfamily. It depends on Mn(2+) as a cofactor.

The protein resides in the cytoplasm. The enzyme catalyses L-tyrosyl-[protein] + ATP = O-phospho-L-tyrosyl-[protein] + ADP + H(+). Its activity is regulated as follows. Inhibited by phosphorylation of Tyr-538 by leukocyte common antigen and activated by dephosphorylation of this site. Tyrosine-protein kinase implicated in the control of cell growth. Plays a role in the regulation of intracellular calcium levels. Required in brain development and mature brain function with important roles in the regulation of axon growth, axon guidance, and neurite extension. Role in CNTN1-mediated signaling. The chain is Tyrosine-protein kinase fynb (fynb) from Danio rerio (Zebrafish).